The sequence spans 355 residues: MSLFDTINAGGAELLGFAWPTVWAVVRILVVSVVILLCVAYLILWERKLIGWMHVRLGPNRVGPGGLLQPIADVLKLLLKEVIQPSAASRWLYLIAPVMTVVPAFAVWAVIPFQAEAVLANVNAGLLYAMAISSIGVYAVILAGWASNSKYAFLGAMRAAAQMVSYEISMGFALVLVLMTAGSLNLSEIVGSQQHGFFAGHGVNFLSWNWLPLLPAFVVYFISGIAETNRHPFDVVEGESEIVAGHMIDYSGMAFALFFLAEYINMIVISALAATLFLGGWDAPFEFLSFIPGIFWLVLKVFALLSVFIWVRATFPRYRYDQIMRLGWKVFLPVTVVWVIVVGFWMMSPLNIWVK.

8 helical membrane passes run 25 to 45, 91 to 111, 126 to 146, 170 to 190, 205 to 225, 253 to 273, 290 to 310, and 330 to 350; these read VVRI…LILW, WLYL…WAVI, LLYA…AGWA, MGFA…SEIV, FLSW…ISGI, MAFA…SALA, FIPG…VFIW, and VFLP…MSPL.

The protein belongs to the complex I subunit 1 family. NDH-1 is composed of 14 different subunits. Subunits NuoA, H, J, K, L, M, N constitute the membrane sector of the complex.

It localises to the cell inner membrane. It catalyses the reaction a quinone + NADH + 5 H(+)(in) = a quinol + NAD(+) + 4 H(+)(out). NDH-1 shuttles electrons from NADH, via FMN and iron-sulfur (Fe-S) centers, to quinones in the respiratory chain. The immediate electron acceptor for the enzyme in this species is believed to be ubiquinone. Couples the redox reaction to proton translocation (for every two electrons transferred, four hydrogen ions are translocated across the cytoplasmic membrane), and thus conserves the redox energy in a proton gradient. This subunit may bind ubiquinone. The sequence is that of NADH-quinone oxidoreductase subunit H from Burkholderia cenocepacia (strain HI2424).